A 115-amino-acid chain; its full sequence is UPF0212 protein MJ0068 (115 aa).

Belongs to the UPF0212 family.

This Methanocaldococcus jannaschii (strain ATCC 43067 / DSM 2661 / JAL-1 / JCM 10045 / NBRC 100440) (Methanococcus jannaschii) protein is UPF0212 protein MJ0068.